Reading from the N-terminus, the 516-residue chain is Histone H4 transcription factor (516 aa).

C2H2-type zinc fingers lie at residues 15-39, 127-151, and 167-191; these read LQCE…VTQH, FLCL…VEAH, and VLCG…LRSH. The C2H2-type 4; degenerate zinc-finger motif lies at 197 to 219; that stretch reads VACPTCGGMFANNTKFLDHIRRQ. C2H2-type zinc fingers lie at residues 227–249, 253–276, 282–304, 310–335, and 343–366; these read FQCS…MRNH, YKCP…RFRH, FKCD…LDTH, YSCD…RKVH, and YRCH…RKKH. The interaction with NPAT stretch occupies residues 371–516; the sequence is PSGHPRFRYK…AAEEPEVQMV (146 aa). The interval 372–405 is required for activation of histone H4 transcription and contributes to DNA-binding; that stretch reads SGHPRFRYKEHEDGYMRLQLVRYESVELTQQLLR. Disordered regions lie at residues 429–456 and 486–516; these read TVPG…PASQ and PGEP…VQMV. Residues 436–445 show a composition bias toward acidic residues; it reads PQEEAEEEGG.

In terms of assembly, binds MBD2 and a histone deacetylase complex. Interacts with NPAT. Post-translationally, ubiquitinated. Ubiquitination may lead to proteasome-mediated degradation.

Its subcellular location is the nucleus. In terms of biological role, transcriptional repressor that binds to the consensus sequence 5'-CGGACGTT-3' and to the RB1 promoter. Transcriptional activator that promotes histone H4 gene transcription at the G1/S phase transition in conjunction with NPAT. Also activates transcription of the ATM and PRKDC genes. Autoregulates its expression by associating with its own promoter. This Bos taurus (Bovine) protein is Histone H4 transcription factor (HINFP).